The following is a 382-amino-acid chain: Histidinol-phosphate aminotransferase (382 aa).

The tract at residues 1 to 28 (MTSAPRPRPTLDDLPLREDLRGKSPYGA) is disordered. A compositionally biased stretch (basic and acidic residues) spans 9–22 (PTLDDLPLREDLRG). Residue lysine 233 is modified to N6-(pyridoxal phosphate)lysine.

It belongs to the class-II pyridoxal-phosphate-dependent aminotransferase family. Histidinol-phosphate aminotransferase subfamily. In terms of assembly, homodimer. Pyridoxal 5'-phosphate serves as cofactor.

The enzyme catalyses L-histidinol phosphate + 2-oxoglutarate = 3-(imidazol-4-yl)-2-oxopropyl phosphate + L-glutamate. It participates in amino-acid biosynthesis; L-histidine biosynthesis; L-histidine from 5-phospho-alpha-D-ribose 1-diphosphate: step 7/9. This Mycobacterium marinum (strain ATCC BAA-535 / M) protein is Histidinol-phosphate aminotransferase.